The primary structure comprises 150 residues: D-aminoacyl-tRNA deacylase (150 aa).

The Gly-cisPro motif, important for rejection of L-amino acids motif lies at 137–138; the sequence is GP.

This sequence belongs to the DTD family. Homodimer.

It localises to the cytoplasm. The enzyme catalyses glycyl-tRNA(Ala) + H2O = tRNA(Ala) + glycine + H(+). It catalyses the reaction a D-aminoacyl-tRNA + H2O = a tRNA + a D-alpha-amino acid + H(+). An aminoacyl-tRNA editing enzyme that deacylates mischarged D-aminoacyl-tRNAs. Also deacylates mischarged glycyl-tRNA(Ala), protecting cells against glycine mischarging by AlaRS. Acts via tRNA-based rather than protein-based catalysis; rejects L-amino acids rather than detecting D-amino acids in the active site. By recycling D-aminoacyl-tRNA to D-amino acids and free tRNA molecules, this enzyme counteracts the toxicity associated with the formation of D-aminoacyl-tRNA entities in vivo and helps enforce protein L-homochirality. This Listeria innocua serovar 6a (strain ATCC BAA-680 / CLIP 11262) protein is D-aminoacyl-tRNA deacylase.